Consider the following 466-residue polypeptide: UDP-N-acetylmuramoylalanine--D-glutamate ligase (466 aa).

124-130 (GSDGKTT) provides a ligand contact to ATP.

It belongs to the MurCDEF family.

The protein resides in the cytoplasm. It carries out the reaction UDP-N-acetyl-alpha-D-muramoyl-L-alanine + D-glutamate + ATP = UDP-N-acetyl-alpha-D-muramoyl-L-alanyl-D-glutamate + ADP + phosphate + H(+). The protein operates within cell wall biogenesis; peptidoglycan biosynthesis. In terms of biological role, cell wall formation. Catalyzes the addition of glutamate to the nucleotide precursor UDP-N-acetylmuramoyl-L-alanine (UMA). This is UDP-N-acetylmuramoylalanine--D-glutamate ligase from Acetivibrio thermocellus (strain ATCC 27405 / DSM 1237 / JCM 9322 / NBRC 103400 / NCIMB 10682 / NRRL B-4536 / VPI 7372) (Clostridium thermocellum).